Here is a 224-residue protein sequence, read N- to C-terminus: MLIEIPNVFSKQEVNQLREQLDARTWIDGNQTSGMMASTRKRNQQLDKDDPVALQIGELIMARLLAHPLFVSAALPLQFYPPLFNRYQGGDTFGYHIDNAIRSTSDGMVRTDLSATLFLSELNAYEGGELVIQDTYGQQSIKLAAGSLVLYPSTSLHQVTPVTSGERTSAFMWLQSMVRDEGQRRLLFQLDQSIQTLTAQQAAEQELFNLTGVYHNLLRRWSEL.

The Fe2OG dioxygenase domain occupies 78-176 (QFYPPLFNRY…RTSAFMWLQS (99 aa)). His96, Asp98, and His157 together coordinate Fe cation. Arg167 is a binding site for 2-oxoglutarate.

The cofactor is Fe(2+). L-ascorbate is required as a cofactor.

This is PKHD-type hydroxylase SO_3913 from Shewanella oneidensis (strain ATCC 700550 / JCM 31522 / CIP 106686 / LMG 19005 / NCIMB 14063 / MR-1).